Here is a 303-residue protein sequence, read N- to C-terminus: MIKQRTLKNIIRATGVGLHSGEKVYLTLKPAPVDTGIVFCRADLDPVVQIPARAENVGETTMSTTLVNGDVKVDTVEHLLSAMAGLGIDNAYVELSASEVPIMDGSAGPFVFLIQSAGLEEQDAAKKFIRILREVTVEDGDKRATFVPFDGFKVSFEIDFDHPVFRDRTQSASVDFSSTSFVKEVSRARTFGFMSDIEYLRKHNLALGGSVENAIVVDSDGVLNEDGLRYEDEFVKHKILDAIGDLYLLGNSLIGEFKGFKSGHALNNQLLRKLIEQKDAWEVVTFEDASTAPISYMRPVAAV.

Residues H78, H237, and D241 each coordinate Zn(2+). H264 acts as the Proton donor in catalysis.

The protein belongs to the LpxC family. Zn(2+) is required as a cofactor.

It catalyses the reaction a UDP-3-O-[(3R)-3-hydroxyacyl]-N-acetyl-alpha-D-glucosamine + H2O = a UDP-3-O-[(3R)-3-hydroxyacyl]-alpha-D-glucosamine + acetate. It functions in the pathway glycolipid biosynthesis; lipid IV(A) biosynthesis; lipid IV(A) from (3R)-3-hydroxytetradecanoyl-[acyl-carrier-protein] and UDP-N-acetyl-alpha-D-glucosamine: step 2/6. Catalyzes the hydrolysis of UDP-3-O-myristoyl-N-acetylglucosamine to form UDP-3-O-myristoylglucosamine and acetate, the committed step in lipid A biosynthesis. In Pseudomonas fluorescens (strain ATCC BAA-477 / NRRL B-23932 / Pf-5), this protein is UDP-3-O-acyl-N-acetylglucosamine deacetylase.